Here is a 482-residue protein sequence, read N- to C-terminus: 2-succinylbenzoate--CoA ligase (482 aa).

The protein belongs to the ATP-dependent AMP-binding enzyme family. MenE subfamily.

It catalyses the reaction 2-succinylbenzoate + ATP + CoA = 2-succinylbenzoyl-CoA + AMP + diphosphate. It participates in quinol/quinone metabolism; 1,4-dihydroxy-2-naphthoate biosynthesis; 1,4-dihydroxy-2-naphthoate from chorismate: step 5/7. Its pathway is quinol/quinone metabolism; menaquinone biosynthesis. Its function is as follows. Converts 2-succinylbenzoate (OSB) to 2-succinylbenzoyl-CoA (OSB-CoA). The protein is 2-succinylbenzoate--CoA ligase of Bacillus thuringiensis subsp. konkukian (strain 97-27).